The primary structure comprises 161 residues: Transcriptional regulator MraZ (161 aa).

SpoVT-AbrB domains lie at 7–69 and 98–141; these read KELH…EPDV and LDVV…EPER.

This sequence belongs to the MraZ family. As to quaternary structure, forms oligomers.

It is found in the cytoplasm. The protein localises to the nucleoid. This Chlorobium limicola (strain DSM 245 / NBRC 103803 / 6330) protein is Transcriptional regulator MraZ.